We begin with the raw amino-acid sequence, 598 residues long: Eukaryotic translation initiation factor 3 subunit D (598 aa).

Positions 104–178 (VKTRGFGRGG…YDKPQRNRDS (75 aa)) are disordered. Residues 109–132 (FGRGGGTIFRGRGQRGGAQRGRGG) show a composition bias toward gly residues. Positions 165–177 (GWKDYDKPQRNRD) are enriched in basic and acidic residues. Positions 304 to 318 (SIDLVTVNENAADAP) are RNA gate. The interval 574 to 598 (NTFEEEDDTGAKAEKDEESEEKDEE) is disordered. Residues 589-598 (DEESEEKDEE) are compositionally biased toward acidic residues.

It belongs to the eIF-3 subunit D family. In terms of assembly, component of the eukaryotic translation initiation factor 3 (eIF-3) complex.

It localises to the cytoplasm. Its function is as follows. mRNA cap-binding component of the eukaryotic translation initiation factor 3 (eIF-3) complex, which is involved in protein synthesis of a specialized repertoire of mRNAs and, together with other initiation factors, stimulates binding of mRNA and methionyl-tRNAi to the 40S ribosome. The eIF-3 complex specifically targets and initiates translation of a subset of mRNAs involved in cell proliferation. In the eIF-3 complex, eif3d specifically recognizes and binds the 7-methylguanosine cap of a subset of mRNAs. This is Eukaryotic translation initiation factor 3 subunit D from Coccidioides immitis (strain RS) (Valley fever fungus).